The following is a 398-amino-acid chain: MKWFLFLLSTIFVQGILGYHVEREYAWRNVTFEGVNPSSYNVLHSIPTGFAYDAETQKLFVAVPRRYPQVPHTLTEIERKKHPERSPPLSKFSGKSSKDLISIYQPVIDECRRLWVVDVGMVDYKEGQPKYRKQNPAIIAFDLTKENYPEVDRYELPAEVVKNPLSFGCFAVDVINPKGGCSDTFLYITNYEENTIVVYDKKNKASWKVSHDSFKPEKDVNIVLDGGKKYSYKVGIFGITLGDREATGNRMAYYLAGSSTKLYKVSTGALKKKGARFDPIRIGDRGPYTEAITLVYDPKTKVIFFAESITRQVSCWNTQTPLDSNHTDVIYSDARFLFGTDISVDSNSTLWVMANGHPPVDDPDIVNNEFYKPQIRLLYVDTRKSIRRTRCDVNGNKP.

A signal peptide spans 1 to 18 (MKWFLFLLSTIFVQGILG). Residues 73 to 94 (TLTEIERKKHPERSPPLSKFSG) form a disordered region. Over residues 75–85 (TEIERKKHPER) the composition is skewed to basic and acidic residues.

This sequence belongs to the major royal jelly protein family. As to expression, female salivary gland (at protein level).

The protein localises to the secreted. In terms of biological role, probably modulates blood feeding of sand flies on vertebrate species by binding and sequestering different mediators involved in the host response. Binds biogenic amines. Binds serotonin with high affinity. Binds histamine with low affinity. This Phlebotomus argentipes (Phlebotomine sand fly) protein is Yellow-related salivary protein SP04.